The chain runs to 161 residues: MSYDLATAERAAYAPFFGYMGAASAQIFTVLGAAYGTAKSAVGISSMGVMRPELIMKSVIPVIMAGIIGIYGLVVAMVLRGKVTSASAGYTLDKGFAHLAAGLTCGLCGLGAGYAIGIVGDAGVRGTAQQPRLFVGMILILIFSEVLGLYGMIVALILGTS.

The Lumenal segment spans residues 1–15; it reads MSYDLATAERAAYAP. A helical membrane pass occupies residues 16–36; it reads FFGYMGAASAQIFTVLGAAYG. At 37–58 the chain is on the cytoplasmic side; sequence TAKSAVGISSMGVMRPELIMKS. A helical membrane pass occupies residues 59 to 79; that stretch reads VIPVIMAGIIGIYGLVVAMVL. Topologically, residues 80 to 98 are lumenal; the sequence is RGKVTSASAGYTLDKGFAH. Residues 99 to 119 form a helical membrane-spanning segment; it reads LAAGLTCGLCGLGAGYAIGIV. Residues 120–137 are Cytoplasmic-facing; it reads GDAGVRGTAQQPRLFVGM. Residues 138–158 traverse the membrane as a helical segment; that stretch reads ILILIFSEVLGLYGMIVALIL. Residues 159-161 are Lumenal-facing; it reads GTS.

Belongs to the V-ATPase proteolipid subunit family. V-ATPase is a heteromultimeric enzyme made up of two complexes: the ATP-hydrolytic V1 complex and the proton translocation V0 complex. The V1 complex consists of three catalytic AB heterodimers that form a heterohexamer, three peripheral stalks each consisting of EG heterodimers, one central rotor including subunits D and F, and the regulatory subunits C and H. The proton translocation complex V0 consists of the proton transport subunit a, a ring of proteolipid subunits c9c'', rotary subunit d, subunits e and f, and the accessory subunits vah-19/Ac45 and vah-20/PRR.

The protein localises to the membrane. Functionally, proton-conducting pore forming subunit of the V0 complex of vacuolar(H+)-ATPase (V-ATPase), a multisubunit enzyme composed of a peripheral complex (V1) that hydrolyzes ATP and a membrane integral complex (V0) that translocates protons. V-ATPase is responsible for acidifying and maintaining the pH of intracellular compartments and in some cell types, is targeted to the plasma membrane, where it is responsible for acidifying the extracellular environment. The chain is V-type proton ATPase 16 kDa proteolipid subunit c (12) from Ascaris suum (Pig roundworm).